We begin with the raw amino-acid sequence, 673 residues long: Methionine--tRNA ligase (673 aa).

The short motif at P15 to H25 is the 'HIGH' region element. C146, C149, C159, and C162 together coordinate Zn(2+). The 'KMSKS' region motif lies at K332–S336. K335 is a binding site for ATP. Positions D572–K673 constitute a tRNA-binding domain.

This sequence belongs to the class-I aminoacyl-tRNA synthetase family. MetG type 1 subfamily. In terms of assembly, homodimer. Zn(2+) serves as cofactor.

The protein resides in the cytoplasm. The enzyme catalyses tRNA(Met) + L-methionine + ATP = L-methionyl-tRNA(Met) + AMP + diphosphate. Its function is as follows. Is required not only for elongation of protein synthesis but also for the initiation of all mRNA translation through initiator tRNA(fMet) aminoacylation. This is Methionine--tRNA ligase from Shewanella loihica (strain ATCC BAA-1088 / PV-4).